The primary structure comprises 1941 residues: Diacylglycerol kinase eta (1941 aa).

Positions 93-186 constitute a PH domain; it reads SIIKEGYLLK…WLGSLKAATA (94 aa). 2 Phorbol-ester/DAG-type zinc fingers span residues 206-256 and 279-330; these read HHHW…IANC and PHQW…AIAC. The DAGKc domain occupies 361 to 497; sequence GNFSPLLVFV…DRWSIMVFEK (137 aa). Disordered regions lie at residues 1030–1068, 1132–1164, 1215–1257, and 1276–1295; these read TTTL…SPPR, CNSN…ETPT, LESA…PSSS, and RRHS…KDKD. The segment covering 1133 to 1155 has biased composition (low complexity); sequence NSNNNSNNNSNSNSNNNNHNDGN. The region spanning 1878-1941 is the SAM domain; the sequence is WSVNEVVTWL…LQAIKDLSEN (64 aa).

Belongs to the eukaryotic diacylglycerol kinase family.

Its subcellular location is the cytoplasm. The enzyme catalyses a 1,2-diacyl-sn-glycerol + ATP = a 1,2-diacyl-sn-glycero-3-phosphate + ADP + H(+). In terms of biological role, phosphorylates diacylglycerol (DAG) to generate phosphatidic acid (PA). The protein is Diacylglycerol kinase eta of Drosophila grimshawi (Hawaiian fruit fly).